A 196-amino-acid chain; its full sequence is uncharacterized protein (196 aa).

This is an uncharacterized protein from Aquifex aeolicus (strain VF5).